The chain runs to 559 residues: Potassium-transporting ATPase potassium-binding subunit (559 aa).

Transmembrane regions (helical) follow at residues 6–26 (FLLIASFLLLLFLLARPLGNV), 63–83 (LLAILLLNVFGLFVLFAMLML), 131–151 (VGLTVQNFLSAASGIAVIFAL), 173–193 (ITLWVLLPISLVIALFFIQQG), 253–273 (FVQMLAIFLIPAALCFAFGDV), 283–303 (LLWAMSLIFVVCAALVMWAEW), 327–347 (FGILASSLYAVVTTAASCGAV), 356–376 (ALGGMIPLWLMQIGEVVFGGV), 379–399 (GLYGMLLFVLLAVFIAGLMIG), 416–436 (LTALAILVTPALVLMGTALAL), 484–504 (LLAFCMFVGRFGVIVPVMAIA), and 524–544 (GALFVGLLIGTVLLVGALTFI).

It belongs to the KdpA family. The system is composed of three essential subunits: KdpA, KdpB and KdpC.

The protein localises to the cell inner membrane. Functionally, part of the high-affinity ATP-driven potassium transport (or Kdp) system, which catalyzes the hydrolysis of ATP coupled with the electrogenic transport of potassium into the cytoplasm. This subunit binds the periplasmic potassium ions and delivers the ions to the membrane domain of KdpB through an intramembrane tunnel. The polypeptide is Potassium-transporting ATPase potassium-binding subunit (Enterobacter sp. (strain 638)).